Consider the following 626-residue polypeptide: Polygalacturonase 1 beta-like protein 3 (626 aa).

A signal peptide spans 1 to 23 (MLKQFLLLQSFSFFLFNVVIVGG). An FXXY 1 repeat occupies 117–120 (FSVY). N-linked (GlcNAc...) asparagine glycosylation is present at N124. FXXY repeat units follow at residues 125-128 (FTNY), 139-142 (FKNY), 153-156 (FRRY), 167-170 (FTVY), 181-184 (FNSY), 195-198 (FTNY), 209-212 (FTAY), 223-226 (FKTY), 238-241 (FTSY), 252-255 (FTSY), and 266-269 (FSNY). Residue N141 is glycosylated (N-linked (GlcNAc...) asparagine). An N-linked (GlcNAc...) asparagine glycan is attached at N277. 7 FXXY repeats span residues 280 to 283 (FTSY), 294 to 297 (FNNY), 308 to 311 (FANY), 322 to 325 (FSSY), 336 to 339 (FVNY), 350 to 353 (FTGY), and 364 to 367 (FKTY). N-linked (GlcNAc...) asparagine glycosylation is present at N370. FXXY repeat units lie at residues 373 to 376 (FKDY) and 383 to 386 (FAKY). 2 N-linked (GlcNAc...) asparagine glycosylation sites follow: N387 and N465. Positions 411-625 (FFRESSLKEG…FENDMNWAIA (215 aa)) constitute a BURP domain.

As to expression, expressed in flowers and stems. Detected in trichomes, guard cells, root vascular tissue, root hairs, pollen sacs, sepals and styles of pistils.

It is found in the secreted. The protein localises to the extracellular space. The protein resides in the apoplast. It localises to the cell wall. In terms of biological role, involved in cell size determination. May serve as a chaperone for expansins through the secretory pathway. In Arabidopsis thaliana (Mouse-ear cress), this protein is Polygalacturonase 1 beta-like protein 3.